Consider the following 286-residue polypeptide: MSDLSVLSPFAVPLAAVLGLLVGSFLNVVIYRVPVMMERGWTVFAKEHLNLPLTDDESRTFNLMKPDSCCPKCRVPIRAWQNIPIVSYLLLRGKCASCQTKISIRYPLIELLTGVLFGLVAWQYGWSWITLGGLILTAFLISLTFIDADTQYLPDSMTLPLIWLGLIFNLDGGFVPLQSAVLGAVAGYSSLWLLCAVYKLLTGKTGMGNGDFKLIAALGAWLGISALPVLIFVSSLIGLVAAIVMRVAKGRHFAFGPALTVSGWIIFTANDSVWRAVNWWLTHPVR.

Residues 10-30 (FAVPLAAVLGLLVGSFLNVVI) form a helical membrane-spanning segment. Positions 70, 73, 95, and 98 each coordinate Zn(2+). The next 6 membrane-spanning stretches (helical) occupy residues 102–122 (ISIR…LVAW), 126–146 (WSWI…LTFI), 157–177 (MTLP…FVPL), 181–201 (VLGA…YKLL), 224–244 (ISAL…AAIV), and 250–270 (GRHF…FTAN).

This sequence belongs to the peptidase A24 family. Zn(2+) serves as cofactor.

Its subcellular location is the cell inner membrane. It carries out the reaction Typically cleaves a -Gly-|-Phe- bond to release an N-terminal, basic peptide of 5-8 residues from type IV prepilin, and then N-methylates the new N-terminal amino group, the methyl donor being S-adenosyl-L-methionine.. In terms of biological role, plays an essential role in type IV pili and type II pseudopili formation by proteolytically removing the leader sequence from substrate proteins and subsequently monomethylating the alpha-amino group of the newly exposed N-terminal phenylalanine. The polypeptide is Prepilin leader peptidase/N-methyltransferase (pilD) (Neisseria gonorrhoeae).